A 664-amino-acid polypeptide reads, in one-letter code: ATP-dependent zinc metalloprotease FtsH (664 aa).

Residues 1–9 (MKQNIKRNW) are Cytoplasmic-facing. Residues 10-30 (IWILIVMIVIGIILYFSIRNL) form a helical membrane-spanning segment. Residues 31 to 136 (FSTKVAEWSI…KSVATPQPNP (106 aa)) are Extracellular-facing. A helical membrane pass occupies residues 137 to 157 (FLGILISSVPVLILIFVMVWI). The Cytoplasmic segment spans residues 158 to 664 (YRSQVKMMNG…SLIEKTSKKE (507 aa)). Position 229–236 (229–236 (GPPGTGKT)) interacts with ATP. His451 is a Zn(2+) binding site. The active site involves Glu452. Zn(2+) is bound by residues His455 and Asp529. Basic and acidic residues predominate over residues 639–649 (IEEKDLSKNSE). The segment at 639 to 664 (IEEKDLSKNSEDNNLDSLIEKTSKKE) is disordered.

It in the central section; belongs to the AAA ATPase family. In the C-terminal section; belongs to the peptidase M41 family. As to quaternary structure, homohexamer. The cofactor is Zn(2+).

It localises to the cell membrane. Functionally, acts as a processive, ATP-dependent zinc metallopeptidase for both cytoplasmic and membrane proteins. Plays a role in the quality control of integral membrane proteins. The sequence is that of ATP-dependent zinc metalloprotease FtsH from Mycoplasmopsis synoviae (strain 53) (Mycoplasma synoviae).